A 445-amino-acid chain; its full sequence is MKKVITLLALMAAAQIYAQGQECINLSENECHRNSSCVPVNFKKCCGDQQFACYEGDFNSCHYITKCYKSSKSLDVIESTNECYIPPAGYELFEPVSSCTNDELKHCSDQGKQCIFKRNDCPNPTSCCPGHGVCEDFNRSESGSGNKEQISTTGNTGPQTRGFTISGTGGTGSVPIDACTNVLCQQGEHCEVDQDGRAHCYVNIESIGTLPLGCLNVVCQPHQHCEIDKESGLAHCVLDINPIGFTTIDASSTVAGSSSTTGGSGGTGSNDICSNVHCPDNYHCEMRQDGKAQCVADINAIGFTTSGASTNGLIPPASTGWSDVCSNVICPPGYYCQKNEQTGKADCLNYSSSTTGGGTGSTTGSIDVCSNVICPPYFHCEKNDKGWAQCAADINAIGFSTSSTNGLVSTTGSNDVCQNVHCPQFFKCEKNENGLGECVSTLIPL.

An N-terminal signal peptide occupies residues 1-20 (MKKVITLLALMAAAQIYAQG). Residues 21–139 (QECINLSENE…GHGVCEDFNR (119 aa)) form the DSCP-N domain. The span at 141–159 (ESGSGNKEQISTTGNTGPQ) shows a compositional bias: polar residues. A disordered region spans residues 141-161 (ESGSGNKEQISTTGNTGPQTR). 6 Follistatin-like domains span residues 178–201 (ACTN…AHCY), 213–237 (GCLN…AHCV), 272–295 (ICSN…AQCV), 324–348 (VCSN…ADCL), 368–391 (VCSN…AQCA), and 416–439 (VCQN…GECV).

Functionally, may contribute to the structure of the coat at the interface between the middle, cellulosic layer and the outer, electron-dense, proteinaceous layer. This Dictyostelium discoideum (Social amoeba) protein is Probable spore coat protein sigD (sigD).